A 437-amino-acid chain; its full sequence is ATP-dependent RNA helicase RhlB (437 aa).

A Q motif motif is present at residues Q9 to A37. The region spanning L40 to V219 is the Helicase ATP-binding domain. Residue A53 to T60 coordinates ATP. Positions D165–D168 match the DEAD box motif. Residues R245–L390 enclose the Helicase C-terminal domain. The tract at residues A395–Q437 is disordered. Positions Q400–R424 are enriched in low complexity. The segment covering N425–Q437 has biased composition (basic residues).

It belongs to the DEAD box helicase family. RhlB subfamily. Component of the RNA degradosome, which is a multiprotein complex involved in RNA processing and mRNA degradation.

The protein localises to the cytoplasm. It catalyses the reaction ATP + H2O = ADP + phosphate + H(+). In terms of biological role, DEAD-box RNA helicase involved in RNA degradation. Has RNA-dependent ATPase activity and unwinds double-stranded RNA. The polypeptide is ATP-dependent RNA helicase RhlB (Photobacterium profundum (strain SS9)).